Here is a 160-residue protein sequence, read N- to C-terminus: UPF0262 protein ELI_10965 (160 aa).

It belongs to the UPF0262 family.

This Erythrobacter litoralis (strain HTCC2594) protein is UPF0262 protein ELI_10965.